The sequence spans 365 residues: Magnesium-chelatase subunit ChlI (365 aa).

Gly-54–Ser-61 serves as a coordination point for ATP.

It belongs to the Mg-chelatase subunits D/I family.

The protein resides in the plastid. It localises to the chloroplast. The enzyme catalyses protoporphyrin IX + Mg(2+) + ATP + H2O = Mg-protoporphyrin IX + ADP + phosphate + 3 H(+). The protein operates within porphyrin-containing compound metabolism; chlorophyll biosynthesis. Involved in chlorophyll biosynthesis; introduces a magnesium ion into protoporphyrin IX to yield Mg-protoporphyrin IX. This chain is Magnesium-chelatase subunit ChlI (chlI), found in Bigelowiella natans (Pedinomonas minutissima).